The sequence spans 511 residues: Spermatogenesis-associated protein 2 (511 aa).

In terms of domain architecture, PUB spans 77–149 (ALHCAFSMLE…AYKLKELVES (73 aa)). The PIM motif signature appears at 320-337 (TYFPTQDDVDLYTDSEPR).

This sequence belongs to the SPATA2 family. In terms of assembly, interacts (via the PIM motif) with RNF31/HOIP (via the PUB domain); the interaction is direct. Interacts (via the PUB domain) with CYLD; the interaction is direct. Expressed in the testis and to a lesser extent in the brain, while skeletal muscle and kidney show weak expression.

It localises to the cytoplasm. Its subcellular location is the nucleus. Functionally, bridging factor that mediates the recruitment of CYLD to the LUBAC complex, thereby regulating TNF-alpha-induced necroptosis. Acts as a direct binding intermediate that bridges RNF31/HOIP, the catalytic subunit of the LUBAC complex, and the deubiquitinase (CYLD), thereby recruiting CYLD to the TNF-R1 signaling complex (TNF-RSC). Required to activate the 'Met-1'- (linear) and 'Lys-63'-linked deubiquitinase activities of CYLD. Controls the kinase activity of RIPK1 and TNF-alpha-induced necroptosis by promoting 'Met-1'-linked deubiquitination of RIPK1 by CYLD. The polypeptide is Spermatogenesis-associated protein 2 (Rattus norvegicus (Rat)).